A 671-amino-acid chain; its full sequence is Amidase chry2 (671 aa).

The active-site Nucleophile is the Cys2. Positions 2-220 (CGISAFITHP…PGHYLICRPN (219 aa)) constitute a Glutamine amidotransferase type-2 domain. An Asparagine synthetase domain is found at 251-639 (VRERLLEAVR…TQDAMDGAFN (389 aa)).

The protein belongs to the asparagine synthetase family.

It participates in pigment biosynthesis. Functionally, amidase; part of the gene cluster that mediates the biosynthesis of the yellow pigment chrysogine. Pyruvic acid and anthranilic acid are likely substrates for the nonribosomal peptide synthetase chry1/NRPS14, with pyruvic acid adenylated by the first A domain and anthranilic acid by the second. If pyruvic acid and anthranilic acid are merged and released from chry1/NRPS14 by hydrolysis, a subsequent amidation would lead to 2-pyruvoylaminobenzamide. This process is probably catalyzed by the amidotransferase chry2 using glutamine as amino donor. The dehydrogenase chry5 that has a terminal berberine bridge domain for C-N cyclization could catalyze the cyclization of 2-pyruvoylaminobenzamide to yield acetyl-4(3H)-quinazolidinone. A final reduction of acetyl-4(3H)-quinazolidinone catalyzed by the oxidoreductase chry4 would result in chrysogine. The chain is Amidase chry2 from Gibberella zeae (strain ATCC MYA-4620 / CBS 123657 / FGSC 9075 / NRRL 31084 / PH-1) (Wheat head blight fungus).